Consider the following 350-residue polypeptide: Phosphotriesterase-related protein (350 aa).

A divalent metal cation is bound by residues histidine 22, histidine 24, glutamate 169, histidine 201, histidine 230, and aspartate 298.

The protein belongs to the metallo-dependent hydrolases superfamily. Phosphotriesterase family. It depends on a divalent metal cation as a cofactor.

The sequence is that of Phosphotriesterase-related protein from Drosophila persimilis (Fruit fly).